The sequence spans 204 residues: Urease accessory protein UreG 1 (204 aa).

14 to 21 (GPVGSGKT) contacts GTP.

Belongs to the SIMIBI class G3E GTPase family. UreG subfamily. Homodimer. UreD, UreF and UreG form a complex that acts as a GTP-hydrolysis-dependent molecular chaperone, activating the urease apoprotein by helping to assemble the nickel containing metallocenter of UreC. The UreE protein probably delivers the nickel.

The protein resides in the cytoplasm. Facilitates the functional incorporation of the urease nickel metallocenter. This process requires GTP hydrolysis, probably effectuated by UreG. The protein is Urease accessory protein UreG 1 of Methylorubrum extorquens (strain PA1) (Methylobacterium extorquens).